A 213-amino-acid polypeptide reads, in one-letter code: ATP phosphoribosyltransferase (213 aa).

The protein belongs to the ATP phosphoribosyltransferase family. Short subfamily. Heteromultimer composed of HisG and HisZ subunits.

The protein resides in the cytoplasm. The enzyme catalyses 1-(5-phospho-beta-D-ribosyl)-ATP + diphosphate = 5-phospho-alpha-D-ribose 1-diphosphate + ATP. It participates in amino-acid biosynthesis; L-histidine biosynthesis; L-histidine from 5-phospho-alpha-D-ribose 1-diphosphate: step 1/9. Functionally, catalyzes the condensation of ATP and 5-phosphoribose 1-diphosphate to form N'-(5'-phosphoribosyl)-ATP (PR-ATP). Has a crucial role in the pathway because the rate of histidine biosynthesis seems to be controlled primarily by regulation of HisG enzymatic activity. This Listeria monocytogenes serovar 1/2a (strain ATCC BAA-679 / EGD-e) protein is ATP phosphoribosyltransferase (hisG).